The chain runs to 254 residues: Phosphoribosylaminoimidazole-succinocarboxamide synthase (254 aa).

The protein belongs to the SAICAR synthetase family.

It catalyses the reaction 5-amino-1-(5-phospho-D-ribosyl)imidazole-4-carboxylate + L-aspartate + ATP = (2S)-2-[5-amino-1-(5-phospho-beta-D-ribosyl)imidazole-4-carboxamido]succinate + ADP + phosphate + 2 H(+). It participates in purine metabolism; IMP biosynthesis via de novo pathway; 5-amino-1-(5-phospho-D-ribosyl)imidazole-4-carboxamide from 5-amino-1-(5-phospho-D-ribosyl)imidazole-4-carboxylate: step 1/2. The protein is Phosphoribosylaminoimidazole-succinocarboxamide synthase of Bartonella henselae (strain ATCC 49882 / DSM 28221 / CCUG 30454 / Houston 1) (Rochalimaea henselae).